A 232-amino-acid chain; its full sequence is Lipoarabinomannan carrier protein LprG (232 aa).

The first 21 residues, 1 to 21, serve as a signal peptide directing secretion; that stretch reads MQTRLTAILAAFLTAVALLAG. C22 carries the N-palmitoyl cysteine lipid modification. C22 is lipidated: S-diacylglycerol cysteine.

It belongs to the LppX/LprAFG lipoprotein family. Post-translationally, modified by Lgt on Cys-22 with an S-linked diacylglyceral, signal peptide is removed by LspA, Cys-22 is further modifed with a fatty acid on its amino group by Lnt yielding a triacylated protein.

The protein localises to the cell inner membrane. Its function is as follows. Helps membrane protein MHAS_02168/C731_2106 (P55) transport triacylglycerides (TAG) across the inner cell membrane into the periplasm and probably ultimately to the outer membrane. Binds TAG in its hydrophobic cavity and transfers it between lipid bilayers. TAG probably regulates lipid metabolism and growth regulation and plays a structural role in the outer membrane. Also binds mannosides, lipoarabinomannan and lipomannan and various glycolipids in the same cavity. The lprG-MHAS_02167/C731_2107 operon complements the vancomycin sensitivity of an M.smegmatis knockout of the same operon. This is Lipoarabinomannan carrier protein LprG from Mycolicibacterium hassiacum (strain DSM 44199 / CIP 105218 / JCM 12690 / 3849) (Mycobacterium hassiacum).